Here is a 557-residue protein sequence, read N- to C-terminus: Protein NRT1/ PTR FAMILY 2.6 (557 aa).

The next 12 helical transmembrane spans lie at 26 to 46 (ITFP…LGWL), 67 to 87 (ILNI…IAAD), 89 to 109 (FFGT…GVVL), 136 to 156 (NIQL…AGGL), 177 to 197 (FFNW…TAIV), 203 to 223 (ISWS…LIVF), 318 to 338 (IIPL…QLGL), 356 to 376 (IPAG…IIVN), 398 to 418 (VGIG…VEAK), 439 to 459 (VLWL…HFPG), 478 to 498 (SITS…IDLI), and 518 to 538 (YWIL…CSWF).

This sequence belongs to the major facilitator superfamily. Proton-dependent oligopeptide transporter (POT/PTR) (TC 2.A.17) family. Expressed in roots.

It is found in the membrane. In terms of biological role, transporter involved in a passive nitrate efflux. The sequence is that of Protein NRT1/ PTR FAMILY 2.6 (NPF2.6) from Arabidopsis thaliana (Mouse-ear cress).